A 95-amino-acid chain; its full sequence is Beta-defensin 132 (95 aa).

An N-terminal signal peptide occupies residues Met-1 to Ala-22. 3 disulfide bridges follow: Cys-27/Cys-55, Cys-35/Cys-49, and Cys-39/Cys-56. The disordered stretch occupies residues Gly-72 to Ser-95. The span at Gln-76–Lys-87 shows a compositional bias: basic residues.

This sequence belongs to the beta-defensin family.

The protein localises to the secreted. Its function is as follows. Has antibacterial activity. This is Beta-defensin 132 (DEFB132) from Pongo pygmaeus (Bornean orangutan).